We begin with the raw amino-acid sequence, 275 residues long: Bis(5'-nucleosyl)-tetraphosphatase, symmetrical (275 aa).

This sequence belongs to the Ap4A hydrolase family.

The enzyme catalyses P(1),P(4)-bis(5'-adenosyl) tetraphosphate + H2O = 2 ADP + 2 H(+). Functionally, hydrolyzes diadenosine 5',5'''-P1,P4-tetraphosphate to yield ADP. This is Bis(5'-nucleosyl)-tetraphosphatase, symmetrical (apaH) from Aggregatibacter actinomycetemcomitans (Actinobacillus actinomycetemcomitans).